Reading from the N-terminus, the 30-residue chain is Fibrinogen (30 aa).

Homodimer. As to expression, secreted into the hemolymph.

It localises to the secreted. Its subcellular location is the extracellular space. Functionally, clotting protein. This Panulirus interruptus (California spiny lobster) protein is Fibrinogen.